A 256-amino-acid chain; its full sequence is Coiled-coil domain-containing protein 90B, mitochondrial (256 aa).

A mitochondrion-targeting transit peptide spans 1–42; it reads MRSRWIWRFLRPDGGGIRWTSTPHGRLSPALRRGFLTTTTKS. The stretch at 129–167 forms a coiled coil; it reads LEKSEFANLRAENEKMKIELDQVKQQLTNETSRIRADNK. The chain crosses the membrane as a helical span at residues 231–253; that stretch reads TIRYLAASVFTCLAIALGFYRFW.

This sequence belongs to the CCDC90 family. In terms of assembly, interacts with MCU.

It localises to the mitochondrion membrane. The polypeptide is Coiled-coil domain-containing protein 90B, mitochondrial (Ccdc90b) (Mus musculus (Mouse)).